Consider the following 118-residue polypeptide: MARVKRGVIARRRHKKILKLAKGYYGARSRVFRVAKQAVIKAGQYAYRDRRQRKRQFRALWIARINAGDRQNGLSYSRLIAGLKKATIEIDRKVLSDLAVNEKAAFAAIVEKAKAVLA.

This sequence belongs to the bacterial ribosomal protein bL20 family.

Functionally, binds directly to 23S ribosomal RNA and is necessary for the in vitro assembly process of the 50S ribosomal subunit. It is not involved in the protein synthesizing functions of that subunit. The polypeptide is Large ribosomal subunit protein bL20 (Azotobacter vinelandii).